The sequence spans 174 residues: Crossover junction endodeoxyribonuclease RuvC (174 aa).

Catalysis depends on residues Asp8, Glu67, and Asp139. Mg(2+) contacts are provided by Asp8, Glu67, and Asp139.

It belongs to the RuvC family. In terms of assembly, homodimer which binds Holliday junction (HJ) DNA. The HJ becomes 2-fold symmetrical on binding to RuvC with unstacked arms; it has a different conformation from HJ DNA in complex with RuvA. In the full resolvosome a probable DNA-RuvA(4)-RuvB(12)-RuvC(2) complex forms which resolves the HJ. Mg(2+) is required as a cofactor.

The protein resides in the cytoplasm. It carries out the reaction Endonucleolytic cleavage at a junction such as a reciprocal single-stranded crossover between two homologous DNA duplexes (Holliday junction).. The RuvA-RuvB-RuvC complex processes Holliday junction (HJ) DNA during genetic recombination and DNA repair. Endonuclease that resolves HJ intermediates. Cleaves cruciform DNA by making single-stranded nicks across the HJ at symmetrical positions within the homologous arms, yielding a 5'-phosphate and a 3'-hydroxyl group; requires a central core of homology in the junction. The consensus cleavage sequence is 5'-(A/T)TT(C/G)-3'. Cleavage occurs on the 3'-side of the TT dinucleotide at the point of strand exchange. HJ branch migration catalyzed by RuvA-RuvB allows RuvC to scan DNA until it finds its consensus sequence, where it cleaves and resolves the cruciform DNA. In Pseudomonas syringae pv. syringae (strain B728a), this protein is Crossover junction endodeoxyribonuclease RuvC.